We begin with the raw amino-acid sequence, 231 residues long: WAP four-disulfide core domain protein 3 (231 aa).

An N-terminal signal peptide occupies residues 1–24 (MMLSCLFLLKALLALGSLESWITA). WAP domains are found at residues 26–68 (EHAK…CRDI), 69–114 (PKGR…VVPI), 119–162 (LAEF…LGDI), and 163–207 (EGGR…VPPV). 16 disulfides stabilise this stretch: Cys33-Cys57, Cys40-Cys61, Cys44-Cys56, Cys50-Cys65, Cys76-Cys102, Cys85-Cys106, Cys89-Cys101, Cys95-Cys110, Cys126-Cys150, Cys133-Cys154, Cys137-Cys149, Cys143-Cys158, Cys170-Cys195, Cys178-Cys199, Cys182-Cys194, and Cys188-Cys203. An N-linked (GlcNAc...) asparagine glycan is attached at Asn107. Asn217 is a glycosylation site (N-linked (GlcNAc...) asparagine).

In terms of tissue distribution, ubiquitously expressed.

It localises to the secreted. The chain is WAP four-disulfide core domain protein 3 (WFDC3) from Homo sapiens (Human).